Consider the following 31-residue polypeptide: Aspartate racemase (31 aa).

A disordered region spans residues proline 1–alanine 31. The segment covering leucine 7–lysine 18 has biased composition (basic and acidic residues).

Belongs to the aspartate/glutamate racemases family. Pyridoxal 5'-phosphate serves as cofactor.

It catalyses the reaction L-aspartate = D-aspartate. With respect to regulation, inhibited by hydroxylamine, aminooxyacetate, phenylhydrazine and sodium borohydride. Highly specific toward aspartate and entirely inactive on glutamate, alanine and serine. The protein is Aspartate racemase of Anadara broughtonii (Blood clam).